Reading from the N-terminus, the 200-residue chain is Dephospho-CoA kinase (200 aa).

In terms of domain architecture, DPCK spans 4–200 (VIGLTGGIAS…AILKKWNIID (197 aa)). ATP is bound at residue 12–17 (ASGKST).

The protein belongs to the CoaE family.

The protein resides in the cytoplasm. The enzyme catalyses 3'-dephospho-CoA + ATP = ADP + CoA + H(+). Its pathway is cofactor biosynthesis; coenzyme A biosynthesis; CoA from (R)-pantothenate: step 5/5. Catalyzes the phosphorylation of the 3'-hydroxyl group of dephosphocoenzyme A to form coenzyme A. The protein is Dephospho-CoA kinase of Bacillus anthracis.